A 112-amino-acid polypeptide reads, in one-letter code: Colipase (112 aa).

An N-terminal signal peptide occupies residues 1–17; it reads MEKILILLLVALSVAYA. Residues 18 to 22 constitute a propeptide, enterostatin, activation peptide; sequence APGPR. 5 cysteine pairs are disulfide-bonded: Cys34/Cys45, Cys40/Cys56, Cys44/Cys78, Cys66/Cys86, and Cys80/Cys104.

It belongs to the colipase family. In terms of assembly, forms a 1:1 stoichiometric complex with pancreatic lipase. Expressed by the pancreas.

It is found in the secreted. Colipase is a cofactor of pancreatic lipase. It allows the lipase to anchor itself to the lipid-water interface. Without colipase the enzyme is washed off by bile salts, which have an inhibitory effect on the lipase. Its function is as follows. Enterostatin has a biological activity as a satiety signal. The sequence is that of Colipase from Homo sapiens (Human).